The sequence spans 175 residues: Co-chaperone protein HscB homolog (175 aa).

In terms of domain architecture, J spans 2-76 (NYFALFNLTP…RAEHMLELRG (75 aa)).

The protein belongs to the HscB family. As to quaternary structure, interacts with HscA and stimulates its ATPase activity.

Functionally, co-chaperone involved in the maturation of iron-sulfur cluster-containing proteins. Seems to help targeting proteins to be folded toward HscA. This Pseudoalteromonas atlantica (strain T6c / ATCC BAA-1087) protein is Co-chaperone protein HscB homolog.